The sequence spans 356 residues: Replication factor C subunit 3 (356 aa).

An N6-acetyllysine modification is found at lysine 20. Phosphoserine is present on serine 125.

This sequence belongs to the activator 1 small subunits family. In terms of assembly, subunit of the RFC complex, an heteropentameric complex consisting of a large subunit RFC1 and four small subunits RFC2, RFC3, RFC4 and RFC5; the RFC complex interacts with PCNA. Forms an heterotetrameric complex with RFC2, RFC4 and RFC5; this complex has ATPase activity but is not stimulated by PCNA. The heterotetramer of subunits RFC2, RFC3, RFC4 and RFC5 interacts with RAD17. Interacts with CNTD1; this interaction facilitates crossover formation.

Its subcellular location is the nucleus. In terms of biological role, subunit of the replication factor C (RFC) complex which acts during elongation of primed DNA templates by DNA polymerases delta and epsilon, and is necessary for ATP-dependent loading of proliferating cell nuclear antigen (PCNA) onto primed DNA. This chain is Replication factor C subunit 3 (RFC3), found in Homo sapiens (Human).